Consider the following 90-residue polypeptide: Acylphosphatase (90 aa).

The region spanning Cys-5–Leu-90 is the Acylphosphatase-like domain. Catalysis depends on residues Arg-20 and Asn-38.

This sequence belongs to the acylphosphatase family.

The enzyme catalyses an acyl phosphate + H2O = a carboxylate + phosphate + H(+). This is Acylphosphatase (acyP) from Vibrio vulnificus (strain CMCP6).